Here is a 228-residue protein sequence, read N- to C-terminus: MACLGRPGCRGWAGASLVLVVVLALAACTESVAGRAMRATDRSSGLPTSAKPARARDLLLQDGDRAPFGQVTQSRVGDSYFTSAVPPECSAALLFKGSPLRPDGSSDHAEAAYNVTGPLPYAESVDVYTNVLNVHDVVWNGFRDVSHCRGDAVGVSRAGRSTPMRLRYFATLSDGVLVWTMSNPRWTCDYGLAVVPHAVLVLSACGFKPGFPMAEWASKRRAQLDSQV.

The N-terminal stretch at 1-27 (MACLGRPGCRGWAGASLVLVVVLALAA) is a signal peptide. Cysteine 28 is lipidated: N-palmitoyl cysteine. Cysteine 28 is lipidated: S-diacylglycerol cysteine. Residues 191–211 (GLAVVPHAVLVLSACGFKPGF) traverse the membrane as a helical segment.

The protein resides in the cell membrane. The protein is Putative lipoprotein LprH (lprH) of Mycobacterium bovis (strain ATCC BAA-935 / AF2122/97).